The following is a 272-amino-acid chain: Insulin-like growth factor-binding protein 5 (272 aa).

Positions 1-20 (MVLLTAVLLLLAAYAGPAQS) are cleaved as a signal peptide. An IGFBP N-terminal domain is found at 23–103 (SFVHCEPCDE…LHGRGVCLNE (81 aa)). Cystine bridges form between Cys27–Cys53, Cys30–Cys55, Cys38–Cys56, Cys45–Cys59, Cys67–Cys80, and Cys74–Cys100. Residues 111–122 (KIERDSREHEEP) show a composition bias toward basic and acidic residues. Residues 111–130 (KIERDSREHEEPTTSEMAEE) are disordered. Ser116 bears the Phosphoserine; by FAM20C mark. Thr172 carries an O-linked (HexNAc...) threonine glycan. The region spanning 189 to 263 (QGPCRRHMEA…MEYVDGDFQC (75 aa)) is the Thyroglobulin type-1 domain. 3 cysteine pairs are disulfide-bonded: Cys192-Cys219, Cys230-Cys241, and Cys243-Cys263.

Interacts with IGF1; this interaction enhances the growth stimulatory effects of IGF1 on fibroblasts. Interacts with CAV1; this interaction allows trafficking of IGFBP5 from the plasma membrane to the nucleus. Interacts with NCL; this interaction is necessary for IGFBP5 localization to the nucleus. Cleaved by C1S in extracellular space. As to expression, osteosarcoma, and at lower levels in liver, kidney and brain.

The protein resides in the secreted. Its subcellular location is the cytoplasm. It is found in the nucleus. In terms of biological role, multifunctional protein that plays a critical role in regulating the availability of IGFs to their receptors and thereby regulates IGF-mediated cellular processes including proliferation, differentiation, and apoptosis in a cell-type specific manner. Increases the cell proliferation of osteoblasts, intestinal smooth muscle cells and neuroblastoma cells. Enhances adhesion and survival of epithelial cells but decreases adhesion of mesenchymal cells. Once secreted, acts as a major mediator of mTORC1-dependent feedback inhibition of IGF1 signaling. Also plays a role in the induction of extracellular matrix (ECM) production and deposition independently of its nuclear translocation and binding to IGFs. Acts itself as a growth factor that can act independently of IGFs to regulate bone formation. Acts as a ligand for the ROR1 receptor which triggers formation of ROR1/HER2 heterodimer to enhance CREB oncogenic signaling. The chain is Insulin-like growth factor-binding protein 5 (IGFBP5) from Homo sapiens (Human).